The primary structure comprises 77 residues: Small ribosomal subunit protein bS20 (77 aa).

Belongs to the bacterial ribosomal protein bS20 family.

In terms of biological role, binds directly to 16S ribosomal RNA. The chain is Small ribosomal subunit protein bS20 from Streptococcus uberis (strain ATCC BAA-854 / 0140J).